The following is a 289-amino-acid chain: Phosphoribulokinase (289 aa).

12 to 20 (GSSGAGTTT) provides a ligand contact to ATP.

The protein belongs to the phosphoribulokinase family.

It catalyses the reaction D-ribulose 5-phosphate + ATP = D-ribulose 1,5-bisphosphate + ADP + H(+). It functions in the pathway carbohydrate biosynthesis; Calvin cycle. The protein is Phosphoribulokinase (cbbP) of Sinorhizobium medicae (strain WSM419) (Ensifer medicae).